The sequence spans 257 residues: Type III pantothenate kinase (257 aa).

An ATP-binding site is contributed by 24 to 31 (MIGNSRLH). Substrate-binding positions include Tyr96 and 100-103 (GIDR). The Proton acceptor role is filled by Asp102. Asp122 is a K(+) binding site. An ATP-binding site is contributed by Thr125. Thr180 contacts substrate.

Belongs to the type III pantothenate kinase family. In terms of assembly, homodimer. NH4(+) serves as cofactor. It depends on K(+) as a cofactor.

The protein resides in the cytoplasm. It catalyses the reaction (R)-pantothenate + ATP = (R)-4'-phosphopantothenate + ADP + H(+). It functions in the pathway cofactor biosynthesis; coenzyme A biosynthesis; CoA from (R)-pantothenate: step 1/5. In terms of biological role, catalyzes the phosphorylation of pantothenate (Pan), the first step in CoA biosynthesis. In Synechocystis sp. (strain ATCC 27184 / PCC 6803 / Kazusa), this protein is Type III pantothenate kinase.